The primary structure comprises 231 residues: 5'-methylthioadenosine/S-adenosylhomocysteine nucleosidase (231 aa).

The Proton acceptor role is filled by Glu-12. Residues Gly-78, Val-153, and Met-174–Glu-175 contribute to the substrate site. The active-site Proton donor is the Asp-198.

Belongs to the PNP/UDP phosphorylase family. MtnN subfamily.

The catalysed reaction is S-adenosyl-L-homocysteine + H2O = S-(5-deoxy-D-ribos-5-yl)-L-homocysteine + adenine. It carries out the reaction S-methyl-5'-thioadenosine + H2O = 5-(methylsulfanyl)-D-ribose + adenine. It catalyses the reaction 5'-deoxyadenosine + H2O = 5-deoxy-D-ribose + adenine. It participates in amino-acid biosynthesis; L-methionine biosynthesis via salvage pathway; S-methyl-5-thio-alpha-D-ribose 1-phosphate from S-methyl-5'-thioadenosine (hydrolase route): step 1/2. Functionally, catalyzes the irreversible cleavage of the glycosidic bond in both 5'-methylthioadenosine (MTA) and S-adenosylhomocysteine (SAH/AdoHcy) to adenine and the corresponding thioribose, 5'-methylthioribose and S-ribosylhomocysteine, respectively. Also cleaves 5'-deoxyadenosine, a toxic by-product of radical S-adenosylmethionine (SAM) enzymes, into 5-deoxyribose and adenine. In Vibrio vulnificus (strain CMCP6), this protein is 5'-methylthioadenosine/S-adenosylhomocysteine nucleosidase.